The primary structure comprises 758 residues: Catalase-peroxidase (758 aa).

Residues 1–10 (MSDTQDNAPA) show a composition bias toward polar residues. The tract at residues 1–59 (MSDTQDNAPASAQGVDQKAAAGCPVAHDSVTAHGSESESPAIDSPTPHSGGRPRTNRDW) is disordered. The segment at residues 128 to 250 (WHAAGTYRID…VGATEMGLIY (123 aa)) is a cross-link (tryptophyl-tyrosyl-methioninium (Trp-Tyr) (with M-276)). Residue H129 is the Proton acceptor of the active site. Positions 250–276 (YVNPEGPRGNADPAAAAHFIRETFRRM) form a cross-link, tryptophyl-tyrosyl-methioninium (Tyr-Met) (with W-128). H291 is a binding site for heme b.

This sequence belongs to the peroxidase family. Peroxidase/catalase subfamily. Homodimer or homotetramer. Heme b serves as cofactor. Formation of the three residue Trp-Tyr-Met cross-link is important for the catalase, but not the peroxidase activity of the enzyme.

It carries out the reaction H2O2 + AH2 = A + 2 H2O. The enzyme catalyses 2 H2O2 = O2 + 2 H2O. In terms of biological role, bifunctional enzyme with both catalase and broad-spectrum peroxidase activity. The protein is Catalase-peroxidase of Salinispora arenicola (strain CNS-205).